The chain runs to 262 residues: Hydroxyethylthiazole kinase (262 aa).

Methionine 50 lines the substrate pocket. 2 residues coordinate ATP: arginine 125 and threonine 171. Substrate is bound at residue glycine 198.

The protein belongs to the Thz kinase family. Mg(2+) is required as a cofactor.

The catalysed reaction is 5-(2-hydroxyethyl)-4-methylthiazole + ATP = 4-methyl-5-(2-phosphooxyethyl)-thiazole + ADP + H(+). It functions in the pathway cofactor biosynthesis; thiamine diphosphate biosynthesis; 4-methyl-5-(2-phosphoethyl)-thiazole from 5-(2-hydroxyethyl)-4-methylthiazole: step 1/1. Functionally, catalyzes the phosphorylation of the hydroxyl group of 4-methyl-5-beta-hydroxyethylthiazole (THZ). This chain is Hydroxyethylthiazole kinase, found in Escherichia fergusonii (strain ATCC 35469 / DSM 13698 / CCUG 18766 / IAM 14443 / JCM 21226 / LMG 7866 / NBRC 102419 / NCTC 12128 / CDC 0568-73).